Here is a 425-residue protein sequence, read N- to C-terminus: Serine--tRNA ligase (425 aa).

L-serine is bound at residue 229–231 (TSE). ATP is bound by residues 259–261 (RKE) and Val-275. Glu-282 is an L-serine binding site. 349–352 (EVTS) is an ATP binding site. Thr-384 lines the L-serine pocket.

The protein belongs to the class-II aminoacyl-tRNA synthetase family. Type-1 seryl-tRNA synthetase subfamily. Homodimer. The tRNA molecule binds across the dimer.

It is found in the cytoplasm. It carries out the reaction tRNA(Ser) + L-serine + ATP = L-seryl-tRNA(Ser) + AMP + diphosphate + H(+). The enzyme catalyses tRNA(Sec) + L-serine + ATP = L-seryl-tRNA(Sec) + AMP + diphosphate + H(+). It functions in the pathway aminoacyl-tRNA biosynthesis; selenocysteinyl-tRNA(Sec) biosynthesis; L-seryl-tRNA(Sec) from L-serine and tRNA(Sec): step 1/1. Functionally, catalyzes the attachment of serine to tRNA(Ser). Is also able to aminoacylate tRNA(Sec) with serine, to form the misacylated tRNA L-seryl-tRNA(Sec), which will be further converted into selenocysteinyl-tRNA(Sec). The chain is Serine--tRNA ligase from Borrelia garinii subsp. bavariensis (strain ATCC BAA-2496 / DSM 23469 / PBi) (Borreliella bavariensis).